Reading from the N-terminus, the 149-residue chain is Calmodulin (149 aa).

The residue at position 2 (Ala-2) is an N-acetylalanine. 4 consecutive EF-hand domains span residues 8–43 (EQIA…LGQN), 44–79 (PTEA…KMKD), 81–116 (DSEE…LGEK), and 117–149 (LTDE…MLAK). Residues Asp-21, Asp-23, Asp-25, Cys-27, Glu-32, Asp-57, Asp-59, Asn-61, Thr-63, Glu-68, Asp-94, Asp-96, Asn-98, and Glu-105 each coordinate Ca(2+). The residue at position 116 (Lys-116) is an N6,N6,N6-trimethyllysine. Asp-130, Asp-132, Asp-134, Gln-136, and Glu-141 together coordinate Ca(2+).

The protein belongs to the calmodulin family.

Functionally, calmodulin mediates the control of a large number of enzymes, ion channels and other proteins by Ca(2+). Among the enzymes to be stimulated by the calmodulin-Ca(2+) complex are a number of protein kinases and phosphatases. This chain is Calmodulin (CALM1), found in Solanum lycopersicum (Tomato).